The chain runs to 538 residues: uncharacterized protein (538 aa).

The signal sequence occupies residues 1 to 17 (MNLQILLLLLLFCHVAA). N-linked (GlcNAc...) asparagine glycosylation is present at N115.

This is an uncharacterized protein from Caenorhabditis elegans.